Consider the following 226-residue polypeptide: EEF1A lysine methyltransferase 3 (226 aa).

S-adenosyl-L-methionine-binding positions include tryptophan 57, glycine 83–glycine 85, aspartate 104, tryptophan 133, and alanine 150.

Belongs to the methyltransferase superfamily. METTL21 family. As to quaternary structure, interacts with members of the heat shock protein 70 and 90 families and of the TCP-1 chaperonin family, as well as with HSPD1, STIP1 and tubulin; at least some of these proteins may be methylation substrates.

The protein resides in the cytoplasm. It is found in the cytoskeleton. The protein localises to the microtubule organizing center. It localises to the centrosome. The catalysed reaction is L-lysyl-[protein] + 3 S-adenosyl-L-methionine = N(6),N(6),N(6)-trimethyl-L-lysyl-[protein] + 3 S-adenosyl-L-homocysteine + 3 H(+). It carries out the reaction L-lysyl-[protein] + S-adenosyl-L-methionine = N(6)-methyl-L-lysyl-[protein] + S-adenosyl-L-homocysteine + H(+). The enzyme catalyses N(6)-methyl-L-lysyl-[protein] + S-adenosyl-L-methionine = N(6),N(6)-dimethyl-L-lysyl-[protein] + S-adenosyl-L-homocysteine + H(+). It catalyses the reaction N(6),N(6)-dimethyl-L-lysyl-[protein] + S-adenosyl-L-methionine = N(6),N(6),N(6)-trimethyl-L-lysyl-[protein] + S-adenosyl-L-homocysteine + H(+). Its function is as follows. Protein-lysine methyltransferase that selectively mono-, di- and trimethylates 'Lys-165' of the translation elongation factors EEF1A1 and EEF1A2 in an aminoacyl-tRNA and GTP-dependent manner. EEF1A1 methylation by EEF1AKMT3 is dynamic as well as inducible by stress conditions, such as ER-stress, and plays a regulatory role on mRNA translation. This chain is EEF1A lysine methyltransferase 3, found in Homo sapiens (Human).